The chain runs to 84 residues: Putative defensin-like protein 63 (84 aa).

An N-terminal signal peptide occupies residues 1 to 21 (MDIRKTYVIIFFVGILTISFS). 4 disulfides stabilise this stretch: Cys40–Cys81, Cys44–Cys67, Cys53–Cys79, and Cys57–Cys80.

It belongs to the DEFL family.

The protein resides in the secreted. The chain is Putative defensin-like protein 63 from Arabidopsis thaliana (Mouse-ear cress).